Here is a 529-residue protein sequence, read N- to C-terminus: uncharacterized protein (529 aa).

The chain crosses the membrane as a helical span at residues F354–L373.

It is found in the host membrane. This is an uncharacterized protein from Acidianus convivator (ATV).